The primary structure comprises 290 residues: 4-hydroxy-tetrahydrodipicolinate synthase (290 aa).

Pyruvate is bound at residue T44. Y132 serves as the catalytic Proton donor/acceptor. K160 serves as the catalytic Schiff-base intermediate with substrate. I202 is a pyruvate binding site.

The protein belongs to the DapA family. In terms of assembly, homotetramer; dimer of dimers.

Its subcellular location is the cytoplasm. The enzyme catalyses L-aspartate 4-semialdehyde + pyruvate = (2S,4S)-4-hydroxy-2,3,4,5-tetrahydrodipicolinate + H2O + H(+). It participates in amino-acid biosynthesis; L-lysine biosynthesis via DAP pathway; (S)-tetrahydrodipicolinate from L-aspartate: step 3/4. Catalyzes the condensation of (S)-aspartate-beta-semialdehyde [(S)-ASA] and pyruvate to 4-hydroxy-tetrahydrodipicolinate (HTPA). The chain is 4-hydroxy-tetrahydrodipicolinate synthase from Legionella pneumophila subsp. pneumophila (strain Philadelphia 1 / ATCC 33152 / DSM 7513).